The primary structure comprises 432 residues: MAKNVVVIGAQWGDEGKGKIVDWLAEEAGGVVRFQGGHNAGHTLVVGGKKTILRLIPSGILHESLDCFIGSGVVVSPEALLGEIDELNAAGVKNVEGRLKIAPTCPLILPYHIALDQAREASRGKGKIGTTGRGIGPAYEDKVARRAIRAADLLHPEKLREKLDAVLAYYNVQLQHLHNAEPVKAEDVMAVIEKVAPRIAPMITDVSRVLNEKNKNGEKLLFEGAQGALLDIDYGTYPFVTSSNCLAGAASAGAGVGPQMLDYVLGIVKAYTTRVGSGPFPTELFDEVGVGLAERGHEFGSVTGRARRCGWFDAAALKRSIQINGISGMCITKLDVMDGVETINICVGYELPDGGKTDILPCGSDAVETCKPIYETMPGWRESTFGVKDYGALPENAKAYLKRIEEVCGAPVAIVSTGPDREETIVLHHPFA.

Residues 13–19 and 41–43 contribute to the GTP site; these read GDEGKGK and GHT. D14 (proton acceptor) is an active-site residue. Mg(2+)-binding residues include D14 and G41. IMP-binding positions include 14–17, 39–42, T131, R145, Q226, T241, and R305; these read DEGK and NAGH. Residue H42 is the Proton donor of the active site. 301–307 lines the substrate pocket; sequence SVTGRAR. GTP-binding positions include R307, 333–335, and 416–418; these read KLD and STG.

It belongs to the adenylosuccinate synthetase family. Homodimer. It depends on Mg(2+) as a cofactor.

It localises to the cytoplasm. It carries out the reaction IMP + L-aspartate + GTP = N(6)-(1,2-dicarboxyethyl)-AMP + GDP + phosphate + 2 H(+). The protein operates within purine metabolism; AMP biosynthesis via de novo pathway; AMP from IMP: step 1/2. Plays an important role in the de novo pathway of purine nucleotide biosynthesis. Catalyzes the first committed step in the biosynthesis of AMP from IMP. This is Adenylosuccinate synthetase from Neisseria meningitidis serogroup B (strain ATCC BAA-335 / MC58).